The following is a 614-amino-acid chain: Chaperone protein HtpG (614 aa).

An a; substrate-binding region spans residues 1–324 (MSQIETKEFQ…SEELPLNISR (324 aa)). The interval 325 to 537 (ETMQDSALIA…SHYGTHSMQR (213 aa)) is b. The interval 538-614 (MMQLMNRDLQ…LNEILEKALR (77 aa)) is c.

Belongs to the heat shock protein 90 family. As to quaternary structure, homodimer.

Its subcellular location is the cytoplasm. In terms of biological role, molecular chaperone. Has ATPase activity. This Desulfitobacterium hafniense (strain Y51) protein is Chaperone protein HtpG.